A 397-amino-acid polypeptide reads, in one-letter code: Growth-regulating factor 1 (397 aa).

The QLQ domain occupies 18–53 (PFTASQWQELEHQALIYKYMASGTPIPSDLILPLRR). Short sequence motifs (bipartite nuclear localization signal) lie at residues 86–105 (RKAE…KKWR) and 123–130 (RGKNRSRK). The region spanning 90-134 (DPEPGRCRRTDGKKWRCSKEAYPDSKYCEKHMHRGKNRSRKPVEM) is the WRC domain. The interval 117–176 (CEKHMHRGKNRSRKPVEMSLATPPPPSSSATSAASNTSAGVAPTTTTTSSPAPSYSRPAP) is disordered. The segment covering 120–129 (HMHRGKNRSR) has biased composition (basic residues). Low complexity predominate over residues 144–174 (SSATSAASNTSAGVAPTTTTTSSPAPSYSRP).

Belongs to the GRF family.

It localises to the nucleus. In terms of biological role, transcription activator that plays a regulatory role in gibberellin-induced stem elongation. In Oryza sativa subsp. japonica (Rice), this protein is Growth-regulating factor 1 (GRF1).